Here is an 808-residue protein sequence, read N- to C-terminus: uncharacterized protein (808 aa).

The 36-residue stretch at S6–R41 folds into the EF-hand 1 domain. TPR repeat units lie at residues F234 to D267, R269 to G301, P310 to H343, F344 to Y377, A378 to H411, V412 to H445, and R447 to V479. The region spanning A600–G635 is the EF-hand 2 domain. Residues F773–C794 adopt a coiled-coil conformation.

This is an uncharacterized protein from Arabidopsis thaliana (Mouse-ear cress).